A 414-amino-acid chain; its full sequence is Na(+)-translocating NADH-quinone reductase subunit B (414 aa).

The next 4 helical transmembrane spans lie at 23–40 (WFAL…PGLV), 56–76 (IMIM…YNAG), 129–149 (FLPI…LFCM), and 164–184 (ILFA…LGIT). An FMN phosphoryl threonine modification is found at threonine 236. The next 5 helical transmembrane spans lie at 268-288 (IPGS…AMIV), 297-317 (IIAG…VIGS), 322-342 (MFSM…GMFF), 358-378 (WWYG…NPAY), and 381-401 (GMML…HLVV).

It belongs to the NqrB/RnfD family. In terms of assembly, composed of six subunits; NqrA, NqrB, NqrC, NqrD, NqrE and NqrF. FMN serves as cofactor.

Its subcellular location is the cell inner membrane. The enzyme catalyses a ubiquinone + n Na(+)(in) + NADH + H(+) = a ubiquinol + n Na(+)(out) + NAD(+). In terms of biological role, NQR complex catalyzes the reduction of ubiquinone-1 to ubiquinol by two successive reactions, coupled with the transport of Na(+) ions from the cytoplasm to the periplasm. NqrA to NqrE are probably involved in the second step, the conversion of ubisemiquinone to ubiquinol. The sequence is that of Na(+)-translocating NADH-quinone reductase subunit B from Vibrio vulnificus (strain CMCP6).